The chain runs to 281 residues: Lipoyl synthase (281 aa).

Residues cysteine 37, cysteine 42, cysteine 48, cysteine 63, cysteine 67, cysteine 70, and serine 274 each coordinate [4Fe-4S] cluster. One can recognise a Radical SAM core domain in the interval 49 to 263 (WSRGTATFMI…RQQAVNKGFK (215 aa)).

This sequence belongs to the radical SAM superfamily. Lipoyl synthase family. [4Fe-4S] cluster is required as a cofactor.

The protein resides in the cytoplasm. The enzyme catalyses [[Fe-S] cluster scaffold protein carrying a second [4Fe-4S](2+) cluster] + N(6)-octanoyl-L-lysyl-[protein] + 2 oxidized [2Fe-2S]-[ferredoxin] + 2 S-adenosyl-L-methionine + 4 H(+) = [[Fe-S] cluster scaffold protein] + N(6)-[(R)-dihydrolipoyl]-L-lysyl-[protein] + 4 Fe(3+) + 2 hydrogen sulfide + 2 5'-deoxyadenosine + 2 L-methionine + 2 reduced [2Fe-2S]-[ferredoxin]. Its pathway is protein modification; protein lipoylation via endogenous pathway; protein N(6)-(lipoyl)lysine from octanoyl-[acyl-carrier-protein]: step 2/2. Its function is as follows. Catalyzes the radical-mediated insertion of two sulfur atoms into the C-6 and C-8 positions of the octanoyl moiety bound to the lipoyl domains of lipoate-dependent enzymes, thereby converting the octanoylated domains into lipoylated derivatives. The protein is Lipoyl synthase of Parabacteroides distasonis (strain ATCC 8503 / DSM 20701 / CIP 104284 / JCM 5825 / NCTC 11152).